The sequence spans 505 residues: Apolipoprotein N-acyltransferase (505 aa).

6 consecutive transmembrane segments (helical) span residues 26–46, 66–86, 89–109, 129–149, 161–181, and 186–206; these read FAPYQLWPIAILSPAILLILL, FATGVSWVYVSISGFGGMPLI, LFLMGMLIAYLAVYSGLFAWL, LWLITDWLRGWVMTGFPWLWL, FAPIGGVELLTLFVLISAGAL, and IHKQWLMIIIPVVLMSAGFGI. The 247-residue stretch at 225-471 folds into the CN hydrolase domain; it reads IQGNVDQNLK…TAVLRAELTP (247 aa). Catalysis depends on Glu-264, which acts as the Proton acceptor. Residue Lys-330 is part of the active site. The active-site Nucleophile is Cys-382. The chain crosses the membrane as a helical span at residues 481 to 501; sequence FGTWPLYFWVALSLMLAWWLP.

It belongs to the CN hydrolase family. Apolipoprotein N-acyltransferase subfamily.

Its subcellular location is the cell inner membrane. The catalysed reaction is N-terminal S-1,2-diacyl-sn-glyceryl-L-cysteinyl-[lipoprotein] + a glycerophospholipid = N-acyl-S-1,2-diacyl-sn-glyceryl-L-cysteinyl-[lipoprotein] + a 2-acyl-sn-glycero-3-phospholipid + H(+). The protein operates within protein modification; lipoprotein biosynthesis (N-acyl transfer). Functionally, catalyzes the phospholipid dependent N-acylation of the N-terminal cysteine of apolipoprotein, the last step in lipoprotein maturation. This Vibrio parahaemolyticus serotype O3:K6 (strain RIMD 2210633) protein is Apolipoprotein N-acyltransferase.